The sequence spans 301 residues: Immediate early response gene 5-like protein (301 aa).

It belongs to the IER family.

This Danio rerio (Zebrafish) protein is Immediate early response gene 5-like protein (ier5l).